Here is a 790-residue protein sequence, read N- to C-terminus: Valine--tRNA ligase (790 aa).

A 'HIGH' region motif is present at residues 40-50 (PTVSGKMHMGH). The 'KMSKS' region motif lies at 521–525 (KMSKS). Residue Lys524 participates in ATP binding.

It belongs to the class-I aminoacyl-tRNA synthetase family. ValS type 2 subfamily.

The protein resides in the cytoplasm. The catalysed reaction is tRNA(Val) + L-valine + ATP = L-valyl-tRNA(Val) + AMP + diphosphate. Functionally, catalyzes the attachment of valine to tRNA(Val). As ValRS can inadvertently accommodate and process structurally similar amino acids such as threonine, to avoid such errors, it has a 'posttransfer' editing activity that hydrolyzes mischarged Thr-tRNA(Val) in a tRNA-dependent manner. The chain is Valine--tRNA ligase from Thermoplasma volcanium (strain ATCC 51530 / DSM 4299 / JCM 9571 / NBRC 15438 / GSS1).